The sequence spans 29 residues: Galanin (29 aa).

Alanine 29 carries the alanine amide modification.

Belongs to the galanin family.

The protein localises to the secreted. Contracts smooth muscle of the gastrointestinal and genitourinary tract, regulates growth hormone release, modulates insulin release, and may be involved in the control of adrenal secretion. The sequence is that of Galanin (gal) from Oncorhynchus mykiss (Rainbow trout).